Here is a 287-residue protein sequence, read N- to C-terminus: 3-methyl-2-oxobutanoate hydroxymethyltransferase (287 aa).

2 residues coordinate Mg(2+): Asp67 and Asp106. 3-methyl-2-oxobutanoate is bound by residues 67–68 (DS), Asp106, and Lys136. Mg(2+) is bound at residue Glu138. The Proton acceptor role is filled by Glu204.

It belongs to the PanB family. As to quaternary structure, homodecamer; pentamer of dimers. It depends on Mg(2+) as a cofactor.

It is found in the cytoplasm. The catalysed reaction is 3-methyl-2-oxobutanoate + (6R)-5,10-methylene-5,6,7,8-tetrahydrofolate + H2O = 2-dehydropantoate + (6S)-5,6,7,8-tetrahydrofolate. Its pathway is cofactor biosynthesis; (R)-pantothenate biosynthesis; (R)-pantoate from 3-methyl-2-oxobutanoate: step 1/2. In terms of biological role, catalyzes the reversible reaction in which hydroxymethyl group from 5,10-methylenetetrahydrofolate is transferred onto alpha-ketoisovalerate to form ketopantoate. This Streptomyces avermitilis (strain ATCC 31267 / DSM 46492 / JCM 5070 / NBRC 14893 / NCIMB 12804 / NRRL 8165 / MA-4680) protein is 3-methyl-2-oxobutanoate hydroxymethyltransferase.